We begin with the raw amino-acid sequence, 348 residues long: Ubiquitin thioesterase OTU1 (348 aa).

Basic residues predominate over residues 1 to 11; sequence MFGPAKGRHFG. The tract at residues 1–39 is disordered; sequence MFGPAKGRHFGVHPAPGFPGGVSQQAAGTKAGPAGAWPV. Residues 50 to 128 are UBX-like; sequence RCKAKDGTHV…IIEEDQTRPR (79 aa). One can recognise an OTU domain in the interval 149-274; sequence LTRTVVPADN…GIHYDPLQRN (126 aa). Residues 154-160 form a cys-loop region; sequence VPADNSC. Asp-157 is an active-site residue. Cys-160 serves as the catalytic Nucleophile. A variable-loop region spans residues 213–223; sequence IKRDDTWGGAI. The tract at residues 263 to 267 is his-loop; the sequence is YDGIH. Ile-266 provides a ligand contact to substrate. Residue His-267 is part of the active site. The S2 site stretch occupies residues 291–296; it reads DIVLVQ. Residues 318–342 form a C2H2-type zinc finger; sequence LRCMVCQKGLTGQAEAREHAKETGH. His-342 is an active-site residue.

Interacts with VCP; the interaction is direct. Interacts with FAF2/UBXD8. Interacts with DERL1; however interaction is dependent on the UBAX-like region, suggesting that it may be indirect. Interacts with PLAA, UBXN6 and VCP; may form a complex involved in macroautophagy.

It localises to the cytoplasm. The catalysed reaction is Thiol-dependent hydrolysis of ester, thioester, amide, peptide and isopeptide bonds formed by the C-terminal Gly of ubiquitin (a 76-residue protein attached to proteins as an intracellular targeting signal).. In terms of biological role, hydrolase that can remove conjugated ubiquitin from proteins and participates in endoplasmic reticulum-associated degradation (ERAD) for misfolded lumenal proteins. May act by triming the ubiquitin chain on the associated substrate to facilitate their threading through the VCP/p97 pore. Ubiquitin moieties on substrates may present a steric impediment to the threading process when the substrate is transferred to the VCP pore and threaded through VCP's axial channel. Mediates deubiquitination of 'Lys-27'-, 'Lys-29'- and 'Lys-33'-linked polyubiquitin chains. Also able to hydrolyze 'Lys-11'-linked ubiquitin chains. Cleaves both polyubiquitin and di-ubiquitin. May play a role in macroautophagy, regulating for instance the clearance of damaged lysosomes. May recruit PLAA, UBXN6 and VCP to damaged lysosome membranes decorated with K48-linked ubiquitin chains and remove these chains allowing autophagosome formation. This chain is Ubiquitin thioesterase OTU1 (YOD1), found in Homo sapiens (Human).